The primary structure comprises 551 residues: MPSARLQQQFIRLWQCCEGKSQDTTLNELAALLSCSRRHMRTLLNTMQDRGWLTWEAEVGRGKRSRLTFLYTGLALQQQRAEDLLEQDRIDQLVQLVGDKATVRQMLVSHLGRSFRQGRHILRVLYYRPLRNLLPGSALRRSETHIARQIFSSLTRINEENGELEADIAHHWQQISPLHWRFFLRPGVHFHHGRELEMDDVIASLKRINTLPLYSHIADIVSPTPWTLDIHLTQPDRWLPLLLGQVPAMILPREWETLSNFASHPIGTGPYAVIRNTTNQLKIQAFDDFFGYRALIDEVNVWVLPEIADEPAGGLMLKGPQGEEKEIESRLEEGCYYLLFDSRTHRGANQQVRDWVNYVLSPTNLVYFAEEQYQQLWFPAYGLLPRWHHARTIKSEKPAGLESLTLTFYQDHSEHRVIAGIMQQILASHQVTLEIKEISYDQWHEGEIESDIWLNSANFTLPLDFSLFAHLCEVPLLQHCIPIDWQADAARWRNGEMNLANWCQQLVASKAMVPLIHHWLIIQGQRSMRGLRMNTLGWFDFKSAWFAPPDP.

Residues 1-116 enclose the HTH marR-type domain; the sequence is MPSARLQQQF…LVSHLGRSFR (116 aa). Residues 26-49 constitute a DNA-binding region (H-T-H motif); that stretch reads LNELAALLSCSRRHMRTLLNTMQD. A solute-binding region spans residues 163 to 492; it reads ELEADIAHHW…IDWQADAARW (330 aa).

Activates the small RNA gene sgrS under glucose-phosphate stress conditions as well as yfdZ. Represses its own transcription under both stress and non-stress conditions. Might act as a sensor of the intracellular accumulation of phosphoglucose by binding these molecules in its C-terminal solute-binding domain. The sequence is that of HTH-type transcriptional regulator SgrR from Shigella boydii serotype 4 (strain Sb227).